Reading from the N-terminus, the 395-residue chain is MEPRIDGGVFIGGIGNSGNEMCSNGVPALGVSSQTEIKVEKVQHTWTVKNFSHCYQEYLENFVYLQRGDEQLTWSIKIYPKGNGENNKDFVFLCLNRVINNNVKAGKIGFKSQFKLRTAENKDIEMRIHPNPSHSDYVSYIKRDVLFPQIMPRDMIIVNVEIDVAVETITTTNEPIQFEPTNSEQQLIEDYQRLFSQELLCDFAINVNGKIIRAHKAVLAARSPVFNAMLTHQDTDEAKSSMMYINDMDYDVIYEMVYYIYCGRCNKDITDMATALLIAADKYRLEELKSHCEKYLVENINIENACSLLIIGDLYSAPKLRKRAVTYILARPKNVTGTPGWEDILKGHPNLITDIFSQIDRQSSTGATSSVSNLPGVPMDIPGITGNIVPPPSGL.

The 122-residue stretch at 41–162 (KVQHTWTVKN…RDMIIVNVEI (122 aa)) folds into the MATH domain. The region spanning 201-269 (CDFAINVNGK…IYCGRCNKDI (69 aa)) is the BTB domain.

In terms of assembly, interacts (via BTB domain) with cul-3. Seems to be a component of a E3 ubiquitin-protein ligase complex containing cul-3. Interacts (probably via MATH domain) with mei-1, which targets mei-1 for ubiquitin-mediated proteolysis. Interacts (probably via MATH domain) with ppfr-1, the regulatory subunit of the PP4 complex; targets ppfr-1 for ubiquitin-mediated proteolysis. May interact (via MATH domain) with unc-89 (via Ig-like C2-type domain 2/3 and, Ig-like C2-type domain 50 and fibronectin type-III domain 2). In terms of tissue distribution, expressed in body wall muscles.

Its subcellular location is the cytoplasm. The protein localises to the myofibril. The protein resides in the sarcomere. It localises to the m line. It is found in the i band. The protein operates within protein modification; protein ubiquitination. Probable substrate-specific adapter of an E3 ubiquitin-protein ligase complex which mediates the ubiquitination and subsequent proteasomal degradation of target proteins. Controls degradation of microtubule severing protein mei-1 after meiosis. Controls degradation of ppfr-1, the regulatory subunit of PP4 complex, after meiosis. In body wall muscles, involved in the organization of myosin thick filaments, likely by regulating the degradation of mei-1 downstream of unc-89. May also activate the TORC1 pathway. The chain is Protein maternal effect lethal 26 (mel-26) from Caenorhabditis elegans.